Consider the following 369-residue polypeptide: Coiled-coil domain-containing protein 149 (369 aa).

Positions 1–249 (MKENNNAEIL…AKYKQMAEAV (249 aa)) form a coiled coil.

This sequence belongs to the CCDC149 family. In terms of tissue distribution, expressed in amphid and phasmid ciliated neurons, and also pharyngeal, touch receptor and motor neurons.

The protein localises to the cell projection. It is found in the cilium. This chain is Coiled-coil domain-containing protein 149, found in Caenorhabditis elegans.